Consider the following 101-residue polypeptide: Early E3A 11.6 kDa glycoprotein (101 aa).

Asn-14 carries an N-linked (GlcNAc...) asparagine; by host glycan. A helical transmembrane segment spans residues 41–62 (MWWFSIALMFVCLIIMWLICCL).

It belongs to the adenoviridae E3A-1 family. Post-translationally, N-glycosylated and probably also O-glycosylated.

Its subcellular location is the host nucleus membrane. The polypeptide is Early E3A 11.6 kDa glycoprotein (Human adenovirus C serotype 6 (HAdV-6)).